Consider the following 202-residue polypeptide: Twist-related protein 1 (202 aa).

The span at 1–18 (MMQDVSSSPVSPADDSLS) shows a compositional bias: low complexity. The tract at residues 1–105 (MMQDVSSSPV…GGGSPQSYEE (105 aa)) is disordered. Over residues 34 to 43 (RGGRKRRSSR) the composition is skewed to basic residues. 2 stretches are compositionally biased toward gly residues: residues 46–65 (AGGGAGPGGAAGGGVGGGDE) and 80–99 (GCGGGGGAGGGGGSSSGGGS). Residues 108-159 (TQRVMANVRERQRTQSLNEAFAALRKIIPTLPSDKLSKIQTLKLAARYIDFL) enclose the bHLH domain. The sufficient for transactivation activity stretch occupies residues 161 to 191 (QVLQSDELDSKMASCSYVAHERLSYAFSVWR).

In terms of assembly, efficient DNA binding requires dimerization with another bHLH protein. Homodimer or heterodimer with E proteins such as TCF3. ID1 binds preferentially to TCF3 but does not interact efficiently with TWIST1 so ID1 levels control the amount of TCF3 available to dimerize with TWIST1 and thus determine the type of dimer formed. In terms of tissue distribution, subset of mesodermal cells.

The protein resides in the nucleus. Its function is as follows. Acts as a transcriptional regulator. Inhibits myogenesis by sequestrating E proteins, inhibiting trans-activation by MEF2, and inhibiting DNA-binding by MYOD1 through physical interaction. This interaction probably involves the basic domains of both proteins. Also represses expression of pro-inflammatory cytokines such as TNFA and IL1B. Regulates cranial suture patterning and fusion. Activates transcription as a heterodimer with E proteins. Regulates gene expression differentially, depending on dimer composition. Homodimers induce expression of FGFR2 and POSTN while heterodimers repress FGFR2 and POSTN expression and induce THBS1 expression. Heterodimerization is also required for osteoblast differentiation. Represses the activity of the circadian transcriptional activator: NPAS2-BMAL1 heterodimer. The protein is Twist-related protein 1 (TWIST1) of Homo sapiens (Human).